The sequence spans 428 residues: Adenylosuccinate synthetase (428 aa).

GTP-binding positions include 12 to 18 (GDEGKGK) and 40 to 42 (GHT). Asp13 acts as the Proton acceptor in catalysis. Mg(2+)-binding residues include Asp13 and Gly40. Residues 13 to 16 (DEGK), 38 to 41 (NAGH), Thr130, Arg144, Gln225, Thr240, and Arg304 each bind IMP. His41 functions as the Proton donor in the catalytic mechanism. 300–306 (VTTGRAR) is a binding site for substrate. Residues Arg306, 332–334 (KID), and 414–416 (SVG) each bind GTP.

This sequence belongs to the adenylosuccinate synthetase family. Homodimer. It depends on Mg(2+) as a cofactor.

The protein resides in the cytoplasm. It catalyses the reaction IMP + L-aspartate + GTP = N(6)-(1,2-dicarboxyethyl)-AMP + GDP + phosphate + 2 H(+). It participates in purine metabolism; AMP biosynthesis via de novo pathway; AMP from IMP: step 1/2. Its function is as follows. Plays an important role in the de novo pathway of purine nucleotide biosynthesis. Catalyzes the first committed step in the biosynthesis of AMP from IMP. In Clostridium botulinum (strain 657 / Type Ba4), this protein is Adenylosuccinate synthetase.